A 431-amino-acid chain; its full sequence is Putative serine/threonine-protein kinase A (431 aa).

In terms of domain architecture, Protein kinase spans 20–279 (YLNKGIVGLG…VREIFQIPYI (260 aa)). Residues 26–34 (VGLGSYGEA) and lysine 49 contribute to the ATP site. Aspartate 147 acts as the Proton acceptor in catalysis. The region spanning 331 to 429 (DVTHRGHVNK…WVHAIQRGIG (99 aa)) is the PH domain.

This sequence belongs to the protein kinase superfamily. Ser/Thr protein kinase family.

The enzyme catalyses L-seryl-[protein] + ATP = O-phospho-L-seryl-[protein] + ADP + H(+). It carries out the reaction L-threonyl-[protein] + ATP = O-phospho-L-threonyl-[protein] + ADP + H(+). In Trypanosoma brucei brucei, this protein is Putative serine/threonine-protein kinase A (NRKA).